The chain runs to 119 residues: Small polypeptide DEVIL 24 (119 aa).

Residues 83-114 form a required for DVL/RTFL small polypeptide activity region; sequence SFTSKCTSLMKQQHARLCIIRLCATMLLRSYT. A helical transmembrane segment spans residues 96–113; the sequence is HARLCIIRLCATMLLRSY.

It belongs to the DVL/RTFL small polypeptides family.

It is found in the cell membrane. Small polypeptide acting as a regulatory molecule which coordinates cellular responses required for differentiation, growth and development, probably by restricting polar cell proliferation in lateral organs and coordinating socket cell recruitment and differentiation at trichome sites. This is Small polypeptide DEVIL 24 from Arabidopsis thaliana (Mouse-ear cress).